Here is a 179-residue protein sequence, read N- to C-terminus: Large ribosomal subunit protein uL6 (179 aa).

It belongs to the universal ribosomal protein uL6 family. As to quaternary structure, part of the 50S ribosomal subunit.

Functionally, this protein binds to the 23S rRNA, and is important in its secondary structure. It is located near the subunit interface in the base of the L7/L12 stalk, and near the tRNA binding site of the peptidyltransferase center. This is Large ribosomal subunit protein uL6 from Mycobacterium avium (strain 104).